The sequence spans 628 residues: Alpha-L-arabinofuranosidase A (628 aa).

The N-terminal stretch at 1–25 is a signal peptide; sequence MVAFSALSGVSALSLLLCLVQHAHG. 8 N-linked (GlcNAc...) asparagine glycosylation sites follow: Asn36, Asn51, Asn74, Asn152, Asn171, Asn260, Asn359, and Asn493.

Belongs to the glycosyl hydrolase 51 family.

The protein localises to the secreted. The catalysed reaction is Hydrolysis of terminal non-reducing alpha-L-arabinofuranoside residues in alpha-L-arabinosides.. It participates in glycan metabolism; L-arabinan degradation. Its function is as follows. Alpha-L-arabinofuranosidase involved in the degradation of arabinoxylan, a major component of plant hemicellulose. Acts only on small linear 1,5-alpha-linked L-arabinofuranosyl oligosaccharides. This is Alpha-L-arabinofuranosidase A (abfA) from Aspergillus kawachii (strain NBRC 4308) (White koji mold).